The chain runs to 645 residues: Threonine--tRNA ligase (645 aa).

The TGS domain maps to 1–61; the sequence is MPAITLPDGS…SSDASVKFIT (61 aa). The catalytic stretch occupies residues 243–536; that stretch reads DHRRIGREMD…LIEQYAGKFP (294 aa). Residues cysteine 336, histidine 387, and histidine 513 each contribute to the Zn(2+) site.

This sequence belongs to the class-II aminoacyl-tRNA synthetase family. Homodimer. The cofactor is Zn(2+).

The protein localises to the cytoplasm. It catalyses the reaction tRNA(Thr) + L-threonine + ATP = L-threonyl-tRNA(Thr) + AMP + diphosphate + H(+). Catalyzes the attachment of threonine to tRNA(Thr) in a two-step reaction: L-threonine is first activated by ATP to form Thr-AMP and then transferred to the acceptor end of tRNA(Thr). Also edits incorrectly charged L-seryl-tRNA(Thr). This Gluconobacter oxydans (strain 621H) (Gluconobacter suboxydans) protein is Threonine--tRNA ligase.